We begin with the raw amino-acid sequence, 239 residues long: Derlin-2 (239 aa).

The Cytoplasmic portion of the chain corresponds to 1-56; sequence MAYQSLRLEYLQIPPVSRAYTTACVLTTAAVQLELITPFQLYFNPELIFKHFQIWR. The chain crosses the membrane as a helical span at residues 57–77; that stretch reads LITNFLFFGPVGFNFLFNMIF. Over 78 to 98 the chain is Lumenal; the sequence is LYRYCRMLEEGSFRGRTADFV. Residues 99–119 traverse the membrane as a helical segment; the sequence is FMFLFGGFLMTLFGLFVSLVF. The Cytoplasmic portion of the chain corresponds to 120–150; it reads LGQAFTIMLVYVWSRRNPYVRMNFFGLLNFQ. Residues 151–171 form a helical membrane-spanning segment; sequence APFLPWVLMGFSLLLGNSIIV. Asp-172 is a topological domain (lumenal). Residues 173-193 form a helical membrane-spanning segment; the sequence is LLGIAVGHIYFFLEDVFPNQP. Over 194 to 239 the chain is Cytoplasmic; the sequence is GGIRILKTPSILKAIFDTPDEDPNYNPLPEERPGGFAWGEGQRLGG. Residues 215–239 are disordered; that stretch reads DPNYNPLPEERPGGFAWGEGQRLGG. Residues 229–239 are compositionally biased toward gly residues; the sequence is FAWGEGQRLGG.

It belongs to the derlin family. As to quaternary structure, forms homo- and heterooligomers with DERL3 and, to a lesser extent, with DERL1. Interacts with the SEL1L/SYVN1 and VCP/SELENOS protein complexes. Mediates association between VCP and EDEM1, as well as that between VCP and the misfolded glycoproteins. Interacts with OS9. Interacts with SELENOK and SELENOS. Interacts with the signal recognition particle/SRP and the SRP receptor; in the process of endoplasmic reticulum stress-induced pre-emptive quality control. Interacts with CCDC47.

It is found in the endoplasmic reticulum membrane. In terms of biological role, functional component of endoplasmic reticulum-associated degradation (ERAD) for misfolded lumenal glycoproteins, but not that of misfolded nonglycoproteins. May act by forming a channel that allows the retrotranslocation of misfolded glycoproteins into the cytosol where they are ubiquitinated and degraded by the proteasome. May mediate the interaction between VCP and misfolded glycoproteins. May also be involved in endoplasmic reticulum stress-induced pre-emptive quality control, a mechanism that selectively attenuates the translocation of newly synthesized proteins into the endoplasmic reticulum and reroutes them to the cytosol for proteasomal degradation. The polypeptide is Derlin-2 (Pongo abelii (Sumatran orangutan)).